The primary structure comprises 376 residues: Succinyl-diaminopimelate desuccinylase (376 aa).

Residue histidine 67 coordinates Zn(2+). Aspartate 69 is a catalytic residue. Aspartate 100 contacts Zn(2+). Glutamate 134 acts as the Proton acceptor in catalysis. The Zn(2+) site is built by glutamate 135, glutamate 163, and histidine 349.

This sequence belongs to the peptidase M20A family. DapE subfamily. As to quaternary structure, homodimer. Zn(2+) is required as a cofactor. Co(2+) serves as cofactor.

The catalysed reaction is N-succinyl-(2S,6S)-2,6-diaminopimelate + H2O = (2S,6S)-2,6-diaminopimelate + succinate. It participates in amino-acid biosynthesis; L-lysine biosynthesis via DAP pathway; LL-2,6-diaminopimelate from (S)-tetrahydrodipicolinate (succinylase route): step 3/3. In terms of biological role, catalyzes the hydrolysis of N-succinyl-L,L-diaminopimelic acid (SDAP), forming succinate and LL-2,6-diaminopimelate (DAP), an intermediate involved in the bacterial biosynthesis of lysine and meso-diaminopimelic acid, an essential component of bacterial cell walls. The chain is Succinyl-diaminopimelate desuccinylase from Actinobacillus succinogenes (strain ATCC 55618 / DSM 22257 / CCUG 43843 / 130Z).